The primary structure comprises 746 residues: Serine/threonine-protein kinase SMU1 (746 aa).

Disordered stretches follow at residues 1 to 138 (MSLV…DTLH) and 155 to 212 (QRSH…GSRN). Composition is skewed to low complexity over residues 15–54 (SSANRAASSLAFQPASTSNSASPTSSSTSTFANGSSSSTT) and 85–105 (SVSSLSNNPPAASPITAPSSA). 3 stretches are compositionally biased toward polar residues: residues 106–121 (LPWSSQNPAASGSTAT), 128–138 (RSNTAGPDTLH), and 156–176 (RSHSSIAAHQASPSLNQSSPT). The span at 194–203 (PSRDRERSRD) shows a compositional bias: basic and acidic residues. In terms of domain architecture, CRIB spans 237–250 (ISTPYDPVHLTHVG). The segment at 301–451 (GGSDVWKKMG…RRETKKSTIK (151 aa)) is disordered. Polar residues predominate over residues 370–380 (PPSNASTSSAD). Residues 414 to 430 (SPASRAPDAPAAVSAAS) are compositionally biased toward low complexity. Residues 472 to 723 (YRSLQKIGQG…ALGMLAHPFL (252 aa)) form the Protein kinase domain. ATP contacts are provided by residues 478–486 (IGQGASGGV) and Lys-501. The active-site Proton acceptor is Asp-591.

The protein belongs to the protein kinase superfamily. STE Ser/Thr protein kinase family. STE20 subfamily.

The protein resides in the cytoplasm. Its subcellular location is the nucleus. It catalyses the reaction L-seryl-[protein] + ATP = O-phospho-L-seryl-[protein] + ADP + H(+). The catalysed reaction is L-threonyl-[protein] + ATP = O-phospho-L-threonyl-[protein] + ADP + H(+). MAP4K component of the MAPK pathway required for the mating pheromone response and the regulation of cell polarity and cell cycle. Phosphorylates histone H2B to form H2BS10ph. In Mycosarcoma maydis (Corn smut fungus), this protein is Serine/threonine-protein kinase SMU1 (SMU1).